The following is a 307-amino-acid chain: Ribosomal RNA small subunit methyltransferase H (307 aa).

Residues 33–35, Asp51, Phe78, Asp96, and Gln103 contribute to the S-adenosyl-L-methionine site; that span reads GGY.

The protein belongs to the methyltransferase superfamily. RsmH family.

The protein localises to the cytoplasm. It carries out the reaction cytidine(1402) in 16S rRNA + S-adenosyl-L-methionine = N(4)-methylcytidine(1402) in 16S rRNA + S-adenosyl-L-homocysteine + H(+). Its function is as follows. Specifically methylates the N4 position of cytidine in position 1402 (C1402) of 16S rRNA. This Rickettsia conorii (strain ATCC VR-613 / Malish 7) protein is Ribosomal RNA small subunit methyltransferase H.